Here is a 432-residue protein sequence, read N- to C-terminus: D-amino acid dehydrogenase (432 aa).

3–17 is an FAD binding site; it reads VLVLGGGVIGVTSAY.

This sequence belongs to the DadA oxidoreductase family. FAD serves as cofactor.

The enzyme catalyses a D-alpha-amino acid + A + H2O = a 2-oxocarboxylate + AH2 + NH4(+). The protein operates within amino-acid degradation; D-alanine degradation; NH(3) and pyruvate from D-alanine: step 1/1. Oxidative deamination of D-amino acids. This is D-amino acid dehydrogenase from Delftia acidovorans (strain DSM 14801 / SPH-1).